We begin with the raw amino-acid sequence, 203 residues long: Small ribosomal subunit protein uS4 (203 aa).

The disordered stretch occupies residues 22–45 (TGKELARRPYKPGQHGPNSRGKVS). Residues 93–156 (QRLDNVVYRL…QNISTIKEAV (64 aa)) enclose the S4 RNA-binding domain.

It belongs to the universal ribosomal protein uS4 family. In terms of assembly, part of the 30S ribosomal subunit. Contacts protein S5. The interaction surface between S4 and S5 is involved in control of translational fidelity.

One of the primary rRNA binding proteins, it binds directly to 16S rRNA where it nucleates assembly of the body of the 30S subunit. Functionally, with S5 and S12 plays an important role in translational accuracy. The protein is Small ribosomal subunit protein uS4 of Enterococcus faecalis (strain ATCC 700802 / V583).